The chain runs to 79 residues: Acyl carrier protein (79 aa).

Residues 2–77 (SDIADKVKKI…DAIDYIEKQK (76 aa)) form the Carrier domain. An O-(pantetheine 4'-phosphoryl)serine modification is found at S37.

It belongs to the acyl carrier protein (ACP) family. In terms of processing, 4'-phosphopantetheine is transferred from CoA to a specific serine of apo-ACP by AcpS. This modification is essential for activity because fatty acids are bound in thioester linkage to the sulfhydryl of the prosthetic group.

It is found in the cytoplasm. It functions in the pathway lipid metabolism; fatty acid biosynthesis. Functionally, carrier of the growing fatty acid chain in fatty acid biosynthesis. This Gluconobacter oxydans (strain 621H) (Gluconobacter suboxydans) protein is Acyl carrier protein.